Here is a 125-residue protein sequence, read N- to C-terminus: Histone H2A.v3 (125 aa).

The protein belongs to the histone H2A family. In terms of assembly, the nucleosome is a histone octamer containing two molecules each of H2A, H2B, H3 and H4 assembled in one H3-H4 heterotetramer and two H2A-H2B heterodimers. The octamer wraps approximately 147 bp of DNA.

It is found in the nucleus. Its subcellular location is the chromosome. Core component of nucleosome which plays a central role in DNA double strand break (DSB) repair. Nucleosomes wrap and compact DNA into chromatin, limiting DNA accessibility to the cellular machineries which require DNA as a template. Histones thereby play a central role in transcription regulation, DNA repair, DNA replication and chromosomal stability. DNA accessibility is regulated via a complex set of post-translational modifications of histones, also called histone code, and nucleosome remodeling. The polypeptide is Histone H2A.v3 (H2Av3) (Dictyostelium discoideum (Social amoeba)).